Consider the following 537-residue polypeptide: Probable feruloyl esterase ARB_07085 (537 aa).

An N-terminal signal peptide occupies residues 1–22; it reads MVTLPLLLSILPLAAVFSSAAS. N-linked (GlcNAc...) asparagine glycans are attached at residues asparagine 67, asparagine 76, and asparagine 189. 3 disulfide bridges follow: cysteine 196–cysteine 459, cysteine 263–cysteine 280, and cysteine 508–cysteine 529. Catalysis depends on serine 197, which acts as the Acyl-ester intermediate. Positions 264, 267, 269, 271, and 273 each coordinate Ca(2+). Asparagine 339 carries N-linked (GlcNAc...) asparagine glycosylation. Active-site charge relay system residues include aspartate 419 and histidine 458.

Belongs to the tannase family.

It is found in the secreted. It carries out the reaction feruloyl-polysaccharide + H2O = ferulate + polysaccharide.. Its function is as follows. Hydrolyzes the feruloyl-arabinose ester bond in arabinoxylans as well as the feruloyl-galactose and feruloyl-arabinose ester bonds. This Arthroderma benhamiae (strain ATCC MYA-4681 / CBS 112371) (Trichophyton mentagrophytes) protein is Probable feruloyl esterase ARB_07085.